The chain runs to 586 residues: Arginine--tRNA ligase (586 aa).

The 'HIGH' region motif lies at 131–141 (ANPTGPMHVGH).

The protein belongs to the class-I aminoacyl-tRNA synthetase family. As to quaternary structure, monomer.

The protein localises to the cytoplasm. It catalyses the reaction tRNA(Arg) + L-arginine + ATP = L-arginyl-tRNA(Arg) + AMP + diphosphate. The chain is Arginine--tRNA ligase from Xanthobacter autotrophicus (strain ATCC BAA-1158 / Py2).